A 645-amino-acid chain; its full sequence is Serine/threonine-protein kinase BUR1 (645 aa).

A Protein kinase domain is found at 55–379; sequence YREEEKLGQG…AMKAKKHPFF (325 aa). ATP is bound by residues 61–69 and lysine 84; that span reads LGQGTFGEV. Aspartate 208 serves as the catalytic Proton acceptor. Disordered regions lie at residues 407–428, 442–513, and 533–645; these read EMNE…STDN, ASIP…KYPA, and RYRN…ADYY. 2 stretches are compositionally biased toward polar residues: residues 409–428 and 457–474; these read NESM…STDN and IPAQ…TQNI. Positions 477 to 486 are enriched in pro residues; sequence EPIPTAPLPK. Residues 578-598 are compositionally biased toward polar residues; the sequence is NRYQNQDYNTSRNTGYNQYSQ.

Belongs to the protein kinase superfamily. CMGC Ser/Thr protein kinase family. CDC2/CDKX subfamily.

Its subcellular location is the nucleus. The catalysed reaction is L-seryl-[protein] + ATP = O-phospho-L-seryl-[protein] + ADP + H(+). It catalyses the reaction L-threonyl-[protein] + ATP = O-phospho-L-threonyl-[protein] + ADP + H(+). It carries out the reaction [DNA-directed RNA polymerase] + ATP = phospho-[DNA-directed RNA polymerase] + ADP + H(+). Its function is as follows. Serine/threonine-protein kinase involved in transcription regulation. Phosphorylates the UBC2/RAD6 ubiquitin-conjugating enzyme (E2), leading to monoubiquitination of histone H2B and the silencing of telomeric-associated genes. Also required for histone H3 methylation. Necessary for the recovery from pheromone-induced growth arrest in the cell cycle G1 phase. This is Serine/threonine-protein kinase BUR1 (BUR1) from Kluyveromyces lactis (strain ATCC 8585 / CBS 2359 / DSM 70799 / NBRC 1267 / NRRL Y-1140 / WM37) (Yeast).